The sequence spans 158 residues: MGRFIFVSFGLLVVFLSLSGTGADFDCPSGWSAYDQYCYRVIKQLKTWEDAEWFCTKQAKGAHLVSVESAGEADFVAQLVAENIKQNKYYVWIGLRIQNKGQQCSTKWSDGSSVNYENLLKSYSKKCFGLKKETEFLQWYNTDCEEKNLFVCKFPPQR.

An N-terminal signal peptide occupies residues 1–23 (MGRFIFVSFGLLVVFLSLSGTGA). 3 disulfide bridges follow: Cys27-Cys38, Cys55-Cys152, and Cys127-Cys144. The C-type lectin domain occupies 34 to 153 (YDQYCYRVIK…CEEKNLFVCK (120 aa)).

It belongs to the snaclec family. As to quaternary structure, heterodimer; disulfide-linked. In terms of tissue distribution, expressed by the venom gland.

It localises to the secreted. Functionally, interferes with one step of hemostasis (modulation of platelet aggregation, or coagulation cascade, for example). In Crotalus durissus terrificus (South American rattlesnake), this protein is Snaclec crotocetin-1.